Reading from the N-terminus, the 457-residue chain is UDP-N-acetyl-alpha-D-muramoyl-L-alanyl-L-glutamate epimerase (457 aa).

The protein belongs to the MurL family.

It carries out the reaction UDP-N-acetyl-alpha-D-muramoyl-L-alanyl-L-glutamate + ATP + H2O = UDP-N-acetyl-alpha-D-muramoyl-L-alanyl-D-glutamate + AMP + diphosphate + H(+). It functions in the pathway cell wall biogenesis; peptidoglycan biosynthesis. Functionally, cell wall formation. Catalyzes epimerization of the terminal L-glutamate in UDP-N-acetyl-alpha-D-muramoyl-L-alanyl-L-glutamate. This chain is UDP-N-acetyl-alpha-D-muramoyl-L-alanyl-L-glutamate epimerase, found in Salinispora tropica (strain ATCC BAA-916 / DSM 44818 / JCM 13857 / NBRC 105044 / CNB-440).